A 156-amino-acid chain; its full sequence is 6,7-dimethyl-8-ribityllumazine synthase (156 aa).

5-amino-6-(D-ribitylamino)uracil-binding positions include F22, 57–59 (AYE), and 81–83 (TVI). Position 86–87 (86–87 (GT)) interacts with (2S)-2-hydroxy-3-oxobutyl phosphate. H89 functions as the Proton donor in the catalytic mechanism. F114 is a 5-amino-6-(D-ribitylamino)uracil binding site. Position 128 (R128) interacts with (2S)-2-hydroxy-3-oxobutyl phosphate.

The protein belongs to the DMRL synthase family. As to quaternary structure, forms an icosahedral capsid composed of 60 subunits, arranged as a dodecamer of pentamers.

It carries out the reaction (2S)-2-hydroxy-3-oxobutyl phosphate + 5-amino-6-(D-ribitylamino)uracil = 6,7-dimethyl-8-(1-D-ribityl)lumazine + phosphate + 2 H2O + H(+). It participates in cofactor biosynthesis; riboflavin biosynthesis; riboflavin from 2-hydroxy-3-oxobutyl phosphate and 5-amino-6-(D-ribitylamino)uracil: step 1/2. Catalyzes the formation of 6,7-dimethyl-8-ribityllumazine by condensation of 5-amino-6-(D-ribitylamino)uracil with 3,4-dihydroxy-2-butanone 4-phosphate. This is the penultimate step in the biosynthesis of riboflavin. This chain is 6,7-dimethyl-8-ribityllumazine synthase, found in Yersinia enterocolitica serotype O:8 / biotype 1B (strain NCTC 13174 / 8081).